Here is a 373-residue protein sequence, read N- to C-terminus: T-protein (373 aa).

The region spanning 1-90 (MVAELTALRD…ESYTSENDKG (90 aa)) is the Chorismate mutase domain. The region spanning 99–361 (RPVVIVGGKG…DHAKRFLVES (263 aa)) is the Prephenate/arogenate dehydrogenase domain.

It in the C-terminal section; belongs to the prephenate/arogenate dehydrogenase family.

The protein resides in the cytoplasm. It carries out the reaction chorismate = prephenate. The enzyme catalyses prephenate + NAD(+) = 3-(4-hydroxyphenyl)pyruvate + CO2 + NADH. Its pathway is amino-acid biosynthesis; L-tyrosine biosynthesis; (4-hydroxyphenyl)pyruvate from prephenate (NAD(+) route): step 1/1. It functions in the pathway metabolic intermediate biosynthesis; prephenate biosynthesis; prephenate from chorismate: step 1/1. The polypeptide is T-protein (tyrA) (Enterobacter agglomerans (Erwinia herbicola)).